Here is a 118-residue protein sequence, read N- to C-terminus: Ribosome-binding factor A (118 aa).

Belongs to the RbfA family. In terms of assembly, monomer. Binds 30S ribosomal subunits, but not 50S ribosomal subunits or 70S ribosomes.

It is found in the cytoplasm. Its function is as follows. One of several proteins that assist in the late maturation steps of the functional core of the 30S ribosomal subunit. Associates with free 30S ribosomal subunits (but not with 30S subunits that are part of 70S ribosomes or polysomes). Required for efficient processing of 16S rRNA. May interact with the 5'-terminal helix region of 16S rRNA. This chain is Ribosome-binding factor A, found in Clostridium beijerinckii (strain ATCC 51743 / NCIMB 8052) (Clostridium acetobutylicum).